The sequence spans 348 residues: Nicotinate-nucleotide--dimethylbenzimidazole phosphoribosyltransferase (348 aa).

Glu317 functions as the Proton acceptor in the catalytic mechanism.

It belongs to the CobT family.

The catalysed reaction is 5,6-dimethylbenzimidazole + nicotinate beta-D-ribonucleotide = alpha-ribazole 5'-phosphate + nicotinate + H(+). It participates in nucleoside biosynthesis; alpha-ribazole biosynthesis; alpha-ribazole from 5,6-dimethylbenzimidazole: step 1/2. In terms of biological role, catalyzes the synthesis of alpha-ribazole-5'-phosphate from nicotinate mononucleotide (NAMN) and 5,6-dimethylbenzimidazole (DMB). This is Nicotinate-nucleotide--dimethylbenzimidazole phosphoribosyltransferase from Clostridioides difficile (strain 630) (Peptoclostridium difficile).